The chain runs to 61 residues: Photosystem II reaction center protein K (61 aa).

Residues 1–24 (MLNTFSLIGICLNSTLFSSSFFFG) constitute a propeptide that is removed on maturation. Residues 36–56 (IVDIMPVIPLFFFLLAFVWQA) form a helical membrane-spanning segment.

The protein belongs to the PsbK family. In terms of assembly, PSII is composed of 1 copy each of membrane proteins PsbA, PsbB, PsbC, PsbD, PsbE, PsbF, PsbH, PsbI, PsbJ, PsbK, PsbL, PsbM, PsbT, PsbX, PsbY, PsbZ, Psb30/Ycf12, at least 3 peripheral proteins of the oxygen-evolving complex and a large number of cofactors. It forms dimeric complexes.

The protein localises to the plastid. It localises to the chloroplast thylakoid membrane. Its function is as follows. One of the components of the core complex of photosystem II (PSII). PSII is a light-driven water:plastoquinone oxidoreductase that uses light energy to abstract electrons from H(2)O, generating O(2) and a proton gradient subsequently used for ATP formation. It consists of a core antenna complex that captures photons, and an electron transfer chain that converts photonic excitation into a charge separation. The protein is Photosystem II reaction center protein K of Nicotiana tomentosiformis (Tobacco).